A 420-amino-acid chain; its full sequence is MTEHEAIVQHLQAVQNASRKIVTLDEDAINALLNDLADRIPDAAETILEANRKDLERMDPADPRYDRLLLNESRLNSIASDLRNVAALPSPLDRVLEERTLPNGLELRKVSVPLGVIGIIYESRPNVTFDVFALCLKSGNATVLKGGSDAAFSNIAIVELIQTVIRDRGLDPEMIYLLPAEREAAHILLNAVGYIDVIIPRGSQALIDFARKHSTVPVIETGAGIVHTYFDESGDLAMGRDIIFNAKTRRPSVCNALDTLIVHKSRIDDLPVLVEQLEEKLVQIFADEPAYYKLLNRYPDELLQIATPENFGTEYLSLKMSIKTVETFEEALDHIAHHSSKHSEAIVASDQATIDAFMKRVDAAAVYANTSTAFTDGAQFGLGAEIGISTQKLHARGPMALKELCTYKWLIEGQGQVRPA.

The protein belongs to the gamma-glutamyl phosphate reductase family.

Its subcellular location is the cytoplasm. The enzyme catalyses L-glutamate 5-semialdehyde + phosphate + NADP(+) = L-glutamyl 5-phosphate + NADPH + H(+). It participates in amino-acid biosynthesis; L-proline biosynthesis; L-glutamate 5-semialdehyde from L-glutamate: step 2/2. Functionally, catalyzes the NADPH-dependent reduction of L-glutamate 5-phosphate into L-glutamate 5-semialdehyde and phosphate. The product spontaneously undergoes cyclization to form 1-pyrroline-5-carboxylate. In Chlorobaculum parvum (strain DSM 263 / NCIMB 8327) (Chlorobium vibrioforme subsp. thiosulfatophilum), this protein is Gamma-glutamyl phosphate reductase.